Here is a 157-residue protein sequence, read N- to C-terminus: Transcriptional regulator MraZ (157 aa).

2 consecutive SpoVT-AbrB domains span residues 7 to 54 (TYTM…GTSL) and 83 to 126 (TEML…EPER).

This sequence belongs to the MraZ family. As to quaternary structure, forms oligomers.

It is found in the cytoplasm. The protein localises to the nucleoid. This chain is Transcriptional regulator MraZ, found in Azorhizobium caulinodans (strain ATCC 43989 / DSM 5975 / JCM 20966 / LMG 6465 / NBRC 14845 / NCIMB 13405 / ORS 571).